Reading from the N-terminus, the 91-residue chain is Protein sigN139 (91 aa).

Asn-23 and Asn-34 each carry an N-linked (GlcNAc...) asparagine glycan. Residues Leu-46 to Leu-68 traverse the membrane as a helical segment.

The protein localises to the membrane. The chain is Protein sigN139 from Dictyostelium discoideum (Social amoeba).